The primary structure comprises 309 residues: Olfactory receptor 2G3 (309 aa).

Residues 1-25 are Extracellular-facing; that stretch reads MGLGNESSLMDFILLGFSDHPRLEA. Asparagine 5 carries N-linked (GlcNAc...) asparagine glycosylation. A helical membrane pass occupies residues 26-49; it reads VLFVFVLFFYLLTLVGNFTIIIIS. At 50–57 the chain is on the cytoplasmic side; it reads YLDPPLHT. Residues 58–79 traverse the membrane as a helical segment; that stretch reads PMYFFLSNLSLLDICFTTSLAP. Over 80–100 the chain is Extracellular; sequence QTLVNLQRPKKTITYGGCVAQ. A disulfide bridge links cysteine 97 with cysteine 189. Residues 101–120 form a helical membrane-spanning segment; that stretch reads LYISLALGSTECILLADMAL. Residues 121-139 are Cytoplasmic-facing; it reads DRYIAVCKPLHYVVIMNPR. The chain crosses the membrane as a helical span at residues 140 to 158; it reads LCQQLASISWLSGLASSLI. The Extracellular portion of the chain corresponds to 159-195; it reads HATFTLQLPLCGNHRLDHFICEVPALLKLACVDTTVN. Residues 196–219 form a helical membrane-spanning segment; it reads ELVLFVVSVLFVVIPPALISISYG. Over 220 to 236 the chain is Cytoplasmic; that stretch reads FITQAVLRIKSVEARHK. Residues 237–259 traverse the membrane as a helical segment; the sequence is AFSTCSSHLTVVIIFYGTIIYVY. Topologically, residues 260–272 are extracellular; that stretch reads LQPSDSYAQDQGK. A helical transmembrane segment spans residues 273–292; sequence FISLFYTMVTPTLNPIIYTL. Residues 293 to 309 lie on the Cytoplasmic side of the membrane; sequence RNKDMKEALRKLLSGKL.

Belongs to the G-protein coupled receptor 1 family.

The protein localises to the cell membrane. Its function is as follows. Odorant receptor. This Homo sapiens (Human) protein is Olfactory receptor 2G3 (OR2G3).